Reading from the N-terminus, the 309-residue chain is Tagatose-6-phosphate kinase (309 aa).

The protein belongs to the carbohydrate kinase PfkB family. LacC subfamily.

It catalyses the reaction D-tagatofuranose 6-phosphate + ATP = D-tagatofuranose 1,6-bisphosphate + ADP + H(+). It participates in carbohydrate metabolism; D-tagatose 6-phosphate degradation; D-glyceraldehyde 3-phosphate and glycerone phosphate from D-tagatose 6-phosphate: step 1/2. The polypeptide is Tagatose-6-phosphate kinase (Streptococcus pyogenes serotype M2 (strain MGAS10270)).